The sequence spans 197 residues: Thymidylate kinase (197 aa).

7-14 (GIDGSGKS) contributes to the ATP binding site.

It belongs to the thymidylate kinase family.

The catalysed reaction is dTMP + ATP = dTDP + ADP. Its function is as follows. Phosphorylation of dTMP to form dTDP in both de novo and salvage pathways of dTTP synthesis. In Thermotoga maritima (strain ATCC 43589 / DSM 3109 / JCM 10099 / NBRC 100826 / MSB8), this protein is Thymidylate kinase (tmk).